The sequence spans 311 residues: Methionyl-tRNA formyltransferase (311 aa).

112-115 (SLLP) provides a ligand contact to (6S)-5,6,7,8-tetrahydrofolate.

Belongs to the Fmt family.

The catalysed reaction is L-methionyl-tRNA(fMet) + (6R)-10-formyltetrahydrofolate = N-formyl-L-methionyl-tRNA(fMet) + (6S)-5,6,7,8-tetrahydrofolate + H(+). Attaches a formyl group to the free amino group of methionyl-tRNA(fMet). The formyl group appears to play a dual role in the initiator identity of N-formylmethionyl-tRNA by promoting its recognition by IF2 and preventing the misappropriation of this tRNA by the elongation apparatus. The chain is Methionyl-tRNA formyltransferase from Agrobacterium fabrum (strain C58 / ATCC 33970) (Agrobacterium tumefaciens (strain C58)).